Reading from the N-terminus, the 401-residue chain is Imidazolonepropionase (401 aa).

His70 and His72 together coordinate Fe(3+). Residues His70 and His72 each contribute to the Zn(2+) site. Arg79, Tyr142, and His175 together coordinate 4-imidazolone-5-propanoate. Tyr142 contacts N-formimidoyl-L-glutamate. Residue His238 coordinates Fe(3+). Residue His238 coordinates Zn(2+). Gln241 provides a ligand contact to 4-imidazolone-5-propanoate. Position 313 (Asp313) interacts with Fe(3+). Asp313 lines the Zn(2+) pocket. N-formimidoyl-L-glutamate contacts are provided by Asn315 and Gly317. Thr318 is a 4-imidazolone-5-propanoate binding site.

Belongs to the metallo-dependent hydrolases superfamily. HutI family. Zn(2+) serves as cofactor. The cofactor is Fe(3+).

The protein resides in the cytoplasm. The catalysed reaction is 4-imidazolone-5-propanoate + H2O = N-formimidoyl-L-glutamate. It participates in amino-acid degradation; L-histidine degradation into L-glutamate; N-formimidoyl-L-glutamate from L-histidine: step 3/3. Functionally, catalyzes the hydrolytic cleavage of the carbon-nitrogen bond in imidazolone-5-propanoate to yield N-formimidoyl-L-glutamate. It is the third step in the universal histidine degradation pathway. In Xanthomonas euvesicatoria pv. vesicatoria (strain 85-10) (Xanthomonas campestris pv. vesicatoria), this protein is Imidazolonepropionase.